Reading from the N-terminus, the 281-residue chain is Ribosomal protein L11 methyltransferase (281 aa).

S-adenosyl-L-methionine-binding residues include T133, G154, D175, and N216.

This sequence belongs to the methyltransferase superfamily. PrmA family.

Its subcellular location is the cytoplasm. It carries out the reaction L-lysyl-[protein] + 3 S-adenosyl-L-methionine = N(6),N(6),N(6)-trimethyl-L-lysyl-[protein] + 3 S-adenosyl-L-homocysteine + 3 H(+). Its function is as follows. Methylates ribosomal protein L11. The chain is Ribosomal protein L11 methyltransferase from Campylobacter jejuni subsp. jejuni serotype O:6 (strain 81116 / NCTC 11828).